Reading from the N-terminus, the 150-residue chain is Cyanate hydratase (150 aa).

Catalysis depends on residues Arg91, Glu94, and Ser117.

The protein belongs to the cyanase family.

It catalyses the reaction cyanate + hydrogencarbonate + 3 H(+) = NH4(+) + 2 CO2. Its function is as follows. Catalyzes the reaction of cyanate with bicarbonate to produce ammonia and carbon dioxide. In Synechococcus sp. (strain CC9311), this protein is Cyanate hydratase.